The following is a 164-amino-acid chain: MADS-box transcription factor 51 (164 aa).

One can recognise an MADS-box domain in the interval 2 to 62 (ARRGRVQLRR…GKLYEYSSSS (61 aa)). A disordered region spans residues 133 to 164 (TKSKKMLAKQNGEGSRSRANSSGSRGQEEGSA).

As to expression, widely expressed.

The protein resides in the nucleus. Functionally, probable transcription factor involved in the regulation of flowering time under short day (SD) conditions. Functions as a promoter of flowering under SD conditions, upstream of EHD1, HD3A and MADS14, but downstream of GIGANTEA (GI). May transmit a SD promotion signal from GI to EHD1. Functions independently of MADS50 to control flowering time. The sequence is that of MADS-box transcription factor 51 from Oryza sativa subsp. japonica (Rice).